A 330-amino-acid chain; its full sequence is GTP 3',8-cyclase (330 aa).

Positions 9 to 225 (RFGRTVNYVR…IRRHHELIPA (217 aa)) constitute a Radical SAM core domain. Arginine 18 provides a ligand contact to GTP. The [4Fe-4S] cluster site is built by cysteine 25 and cysteine 29. Tyrosine 31 is an S-adenosyl-L-methionine binding site. Cysteine 32 lines the [4Fe-4S] cluster pocket. Arginine 67 serves as a coordination point for GTP. Glycine 71 serves as a coordination point for S-adenosyl-L-methionine. Threonine 97 lines the GTP pocket. Serine 121 provides a ligand contact to S-adenosyl-L-methionine. GTP is bound at residue lysine 158. Methionine 192 lines the S-adenosyl-L-methionine pocket. 2 residues coordinate [4Fe-4S] cluster: cysteine 256 and cysteine 259. Position 261 to 263 (261 to 263 (RVR)) interacts with GTP. Residue cysteine 273 coordinates [4Fe-4S] cluster.

Belongs to the radical SAM superfamily. MoaA family. In terms of assembly, monomer and homodimer. It depends on [4Fe-4S] cluster as a cofactor.

It carries out the reaction GTP + AH2 + S-adenosyl-L-methionine = (8S)-3',8-cyclo-7,8-dihydroguanosine 5'-triphosphate + 5'-deoxyadenosine + L-methionine + A + H(+). It participates in cofactor biosynthesis; molybdopterin biosynthesis. Functionally, catalyzes the cyclization of GTP to (8S)-3',8-cyclo-7,8-dihydroguanosine 5'-triphosphate. The sequence is that of GTP 3',8-cyclase from Marinobacter nauticus (strain ATCC 700491 / DSM 11845 / VT8) (Marinobacter aquaeolei).